The sequence spans 77 residues: uncharacterized protein (77 aa).

This is an uncharacterized protein from Bacillus licheniformis.